A 51-amino-acid chain; its full sequence is DNA-directed RNA polymerase subunit Rpo12 (51 aa).

3 residues coordinate Zn(2+): Cys14, Cys29, and Cys32.

Belongs to the archaeal Rpo12/eukaryotic RPC10 RNA polymerase subunit family. Part of the RNA polymerase complex. Zn(2+) serves as cofactor.

Its subcellular location is the cytoplasm. The catalysed reaction is RNA(n) + a ribonucleoside 5'-triphosphate = RNA(n+1) + diphosphate. Its function is as follows. DNA-dependent RNA polymerase (RNAP) catalyzes the transcription of DNA into RNA using the four ribonucleoside triphosphates as substrates. The protein is DNA-directed RNA polymerase subunit Rpo12 of Methanopyrus kandleri (strain AV19 / DSM 6324 / JCM 9639 / NBRC 100938).